The chain runs to 64 residues: Sec-independent protein translocase protein TatA (64 aa).

Residues Leu-10–Gly-30 traverse the membrane as a helical segment.

The protein belongs to the TatA/E family. In terms of assembly, forms a complex with TatC.

It localises to the cell membrane. Its function is as follows. Part of the twin-arginine translocation (Tat) system that transports large folded proteins containing a characteristic twin-arginine motif in their signal peptide across membranes. TatA could form the protein-conducting channel of the Tat system. The sequence is that of Sec-independent protein translocase protein TatA from Alkaliphilus oremlandii (strain OhILAs) (Clostridium oremlandii (strain OhILAs)).